A 153-amino-acid polypeptide reads, in one-letter code: UPF0251 protein Daud_0090 (153 aa).

A compositionally biased stretch (basic and acidic residues) spans E129 to S138. The segment at E129–R153 is disordered. Basic residues predominate over residues R139–R153.

It belongs to the UPF0251 family.

The polypeptide is UPF0251 protein Daud_0090 (Desulforudis audaxviator (strain MP104C)).